Reading from the N-terminus, the 438-residue chain is POU domain, class 3, transcription factor 3-A (438 aa).

3 disordered regions span residues V22–G43, S102–Q172, and G186–D248. Composition is skewed to polar residues over residues P103–S123 and Q146–H159. Residues I160–Q172 are compositionally biased toward low complexity. Positions H210–H230 are enriched in basic residues. A POU-specific domain is found at E242 to D316. Positions K334 to T393 form a DNA-binding region, homeobox.

This sequence belongs to the POU transcription factor family. Class-3 subfamily. In terms of tissue distribution, predominantly expressed in the embryonic and adult central nervous system. In adults, isoform 2 is expressed in the brain, ovary, basal cells of the skin and muscle satellite cells.

It is found in the nucleus. Transcription factor that may play important roles in patterning the embryonic brain. This Danio rerio (Zebrafish) protein is POU domain, class 3, transcription factor 3-A (pou3f3a).